We begin with the raw amino-acid sequence, 1295 residues long: MMEILRGSPALSAFRINKLLARFQAANLQVHNIYAEYVHFADLNAPLNDSEQAQLTRLLQYGPALNSHTPAGKLLLVTPRPGTISPWSSKATDIAHNCGLQQVDRLERGVAYYIEASTLTAEQWRQVAAELHDRMMETVFSSLTDAEKLFIHHQPAPVSSVDLLGEGRQALIDANLRLGLALAEDEIDYLQEAFTKLGRNPNDIELYMFAQANSEHCRHKIFNADWIIDGKPQPKSLFKMIKNTFETTPDYVLSAYKDNAAVMEGSAVGRYFADHNTGRYDFHQEPAHILMKVETHNHPTAISPWPGAATGSGGEIRDEGATGRGAKPKAGLVGFSVSNLRIPGFEQPWEEDFGKPERIVTALDIMTEGPLGGAAFNNEFGRPALTGYFRTYEDKVNSHNGEELRGYHKPIMLAGGIGNIRADHVQKGEIVVGAKLIVLGGPAMNIGLGGGAASSMASGQSDVDLDFASVQRDNPEMERRCQEVIDRCWQLGDANPILFIHDVGAGGLSNAMPELVSDGGRGGKFELRDILSDEPGMSPLEIWCNESQERYVLAVAADQLPLFDELCKRERAPYAVIGDATEEQHLSLHDNHFDNQPIDLPLDVLLGKTPKMTRDVQTLKAKGDALNRADITIADAVNRVLHLPTVAEKTFLVTIGDRTVTGMVARDQMVGPWQVPVADCAVTTASLDSYYGEAMSIGERAPVALLDFAASARLAVGEALTNIAATQIGDIKRIKLSANWMAAAGHPGEDAGLYDAVKAVGEELCPQLGLTIPVGKDSMSMKTRWQEGNEQREMTSPLSLVISAFARVEDVRHTLTPQLSTEDNALLLIDLGKGHNALGATALAQVYRQLGDKPADVRDVAQLKGFYDAMQALVAARKLLAWHDRSDGGLLVTLAEMAFAGHCGVQVDIAALGDDHLAALFNEELGGVIQVRAEDREAVEALLAQYGLADCVHYLGQALAGDRFVITANDQTVFSESRTTLRVWWAETTWQMQRLRDNPQCADQEHEAKANDADPGLNVKLSFDINEDIAAPYIATGARPKVAVLREQGVNSHVEMAAAFHRAGFDAIDVHMSDLLGGRIGLGNFHALVACGGFSYGDVLGAGEGWAKSILFNPRVRDEFETFFHRPQTLALGVCNGCQMMSNLRELIPGSELWPRFVRNHSDRFEARFSLVEVTQSPSLLLQGMVGSQMPIAVSHGEGRVEVRDDAHLAALESKGLVALRYVDNFGKVTETYPANPNGSPNGITAVTTENGRVTIMMPHPERVFRTVANSWHPENWGEDSPWMRIFRNARKQLG.

The disordered stretch occupies residues 305-327 (WPGAATGSGGEIRDEGATGRGAK). ATP is bound by residues 307-318 (GAATGSGGEIRD), 386-388 (TGY), and Ala-678. Mg(2+) is bound by residues Asp-679, Glu-718, Asn-722, and Asp-884. An ATP-binding site is contributed by Ser-886. A Glutamine amidotransferase type-1 domain is found at 1042–1295 (VAVLREQGVN…IFRNARKQLG (254 aa)). The active-site Nucleophile is the Cys-1135. Residues His-1260 and Glu-1262 contribute to the active site.

It in the N-terminal section; belongs to the FGAMS family. In terms of assembly, monomer.

The protein resides in the cytoplasm. It catalyses the reaction N(2)-formyl-N(1)-(5-phospho-beta-D-ribosyl)glycinamide + L-glutamine + ATP + H2O = 2-formamido-N(1)-(5-O-phospho-beta-D-ribosyl)acetamidine + L-glutamate + ADP + phosphate + H(+). It participates in purine metabolism; IMP biosynthesis via de novo pathway; 5-amino-1-(5-phospho-D-ribosyl)imidazole from N(2)-formyl-N(1)-(5-phospho-D-ribosyl)glycinamide: step 1/2. Its function is as follows. Phosphoribosylformylglycinamidine synthase involved in the purines biosynthetic pathway. Catalyzes the ATP-dependent conversion of formylglycinamide ribonucleotide (FGAR) and glutamine to yield formylglycinamidine ribonucleotide (FGAM) and glutamate. This is Phosphoribosylformylglycinamidine synthase from Salmonella paratyphi A (strain ATCC 9150 / SARB42).